Consider the following 436-residue polypeptide: Histone acetyltransferase RTT109 (436 aa).

Residues 2 to 404 (SLNDFLSSVL…LQSLTGKREH (403 aa)) enclose the Rtt109-type HAT domain. Acetyl-CoA-binding positions include 88-90 (ADT) and 97-101 (RVSVR). The tract at residues 128–170 (RSYKKISPELISAASTPARTLRILARRLKQSGSTVLKEIESPR) is interaction with VPS75. Residues phenylalanine 192, alanine 196, 211–213 (HIL), and tryptophan 221 contribute to the acetyl-CoA site. Aspartate 288 (proton donor/acceptor) is an active-site residue. Lysine 290 is subject to N6-acetyllysine; by autocatalysis. Residues 419 to 433 (LAITMLKPRKKAKAL) form an interaction with ASF1 region.

This sequence belongs to the RTT109 family. Forms a complex composed of two RTT109 subunits and one VPS75 homodimer; each RTT109 subunit interacts predominantly with VPS75 instead of interacting with the other RTT109 subunit. Interacts with VPS75; the interaction is direct. Interacts (via C-terminus) with ASF1; the interaction is direct. Interacts with histone H3/H4 heterodimers via histone H3.

The protein localises to the nucleus. The catalysed reaction is L-lysyl-[histone] + acetyl-CoA = N(6)-acetyl-L-lysyl-[histone] + CoA + H(+). It carries out the reaction L-lysyl-[protein] + acetyl-CoA = N(6)-acetyl-L-lysyl-[protein] + CoA + H(+). Its function is as follows. Histone chaperone-dependent acetylase that modifies 'Lys-9', 'Lys-14', 'Lys-23', 'Lys-27', and 'Lys-56' on histone H3 (H3K9Ac, H3K14Ac and H3K23Ac, H3K27Ac, and H3K56Ac) to promote nucleosome assembly, genomic stability, DNA repair and transcriptional regulation during mitotic S-phase. Its residue selectivity is influenced by the acetylation status of histone H3, and also the presence of histone chaperone ASF1 that shifts selectivity to 'Lys-56' when H3K14Ac is already present. H3K56 acetylation weakens the interaction between the histone core and the surrounding DNA in the nucleosomal particle and drives chromatin disassembly. Autoacetylates. Independently of acetyltransferase activity, stimulates histone deposition by VPS75. Involved in regulation of Ty1 transposition. This chain is Histone acetyltransferase RTT109, found in Saccharomyces cerevisiae (strain ATCC 204508 / S288c) (Baker's yeast).